The sequence spans 955 residues: Serine-aspartate repeat-containing protein C (955 aa).

Residues 1 to 50 (MNNKKTVTNRKGMIPNRLNKFSIRKYSVGTASILVGTTLIFGLSGHEAKA) form the signal peptide. Positions 51 to 166 (AEHTNGELNQ…TPKTTTIKPR (116 aa)) are disordered. The interval 51–495 (AEHTNGELNQ…GSSTANGDQK (445 aa)) is ligand binding A region. The span at 56 to 71 (GELNQSKNETTAPSEN) shows a compositional bias: polar residues. Basic and acidic residues predominate over residues 72–83 (KTTEKVDSHQLK). Residues 84-114 (DNTQTATADQPKVTMSDSATFKETSSNMQSP) show a composition bias toward polar residues. Positions 115–132 (QNATASQSTTQTSNVTTN) are enriched in low complexity. Residues 133 to 164 (DKSSTTYSNETDKSNLTQAKDVSATPKTTTIK) show a composition bias toward polar residues. CNA-B domains are found at residues 496–606 (KYNL…YKTP) and 607–717 (KYSL…EEET). A disordered region spans residues 678–935 (TQTGTNTTED…NNSNNGTLFG (258 aa)). Acidic residues-rich tracts occupy residues 685–695 (TEDDKDADGGE) and 712–894 (YYEE…DSDS). Positions 918–922 (LPETG) match the LPXTG sorting signal motif. The span at 920–935 (ETGSENNNSNNGTLFG) shows a compositional bias: low complexity. At threonine 921 the chain carries Pentaglycyl murein peptidoglycan amidated threonine. The propeptide at 922 to 955 (GSENNNSNNGTLFGGLFAALGSLLLFGRRKKQNK) is removed by sortase.

Belongs to the serine-aspartate repeat-containing protein (SDr) family. In terms of assembly, homodimerizes; via N2-Domain. Interacts with host NRXN1; this interaction mediates bacterial attachment to host cells.

It is found in the secreted. It localises to the cell wall. Functionally, cell surface-associated calcium-binding protein which plays an important role in adhesion and pathogenesis. Mediates interactions with components of the extracellular matrix such as host NRXN1 to promote bacterial adhesion. This Staphylococcus aureus (strain MW2) protein is Serine-aspartate repeat-containing protein C (sdrC).